Reading from the N-terminus, the 100-residue chain is Guanine nucleotide-binding protein subunit gamma 2 (100 aa).

N-acetylmethionine is present on methionine 1. The stretch at 19 to 55 (TRGKHRIQAELKRLEQEARFLEEELEQLEKMDNASAS) forms a coiled coil. In terms of domain architecture, G protein gamma spans 21–100 (GKHRIQAELK…EAKRCGCSIL (80 aa)). Positions 90–96 (KEAKRCG) are regulates lipidation and cell membrane subcellular localization. Cysteine 95 is lipidated: S-palmitoyl cysteine. Residue cysteine 97 is modified to Cysteine methyl ester. Cysteine 97 carries S-farnesyl cysteine lipidation. A propeptide spans 98–100 (SIL) (removed in mature form).

As to quaternary structure, g proteins are composed of 3 units, alpha, beta and gamma. GPG1 interacts with the beta subunit GB1. The dimer GB1-GG2 interacts with NDL1, NDL2 and NDL3. Binds to NUDT7. As to expression, mostly expressed in roots (excluded from the stele), seedlings (especially at the hypocotyl/root junction), floral stems, floral buds, flowers and siliques, and, to a lower extent, in leaves (restricted to guard cells). Also present in hydathods.

The protein localises to the cell membrane. Guanine nucleotide-binding proteins (G proteins) are involved as a modulator or transducer in various transmembrane signaling systems. The beta and gamma chains are required for the GTPase activity, for replacement of GDP by GTP, and for G protein-effector interaction. Involved in the abscisic acid (ABA) and ethylene signaling pathways. Regulates basipetal transport of auxin (IAA) in roots and hypocotyls, and thus modulates root architecture (e.g. lateral root formation). The heterotrimeric G-protein controls defense responses to necrotrophic and vascular fungi probably by modulating cell wall-related genes expression; involved in resistance to Plectosphaerella cucumerina. In Arabidopsis thaliana (Mouse-ear cress), this protein is Guanine nucleotide-binding protein subunit gamma 2 (GG2).